The sequence spans 440 residues: MGPPGSPWQWVLLLLGLLLPPAAPFWLLNVLFPPHTTPKAELSNHTRPVILVPGCLGNQLEAKLDKPSVVNWMCYRKTEDFFTIWLDLNMFLPLGVDCWIDNTRVVYNRSSGRVVISPGVQIRVPGFGKTYSVEYLDNNKLAGYMHTLVQNLVNNGYVRDETVRAAPYDWRLEPSQQEEYYGKLAGLVEEMHAAYGKPVFLIGHSLGCLHLLYFLLRQPQSWKDRFIDGFISLGAPWGGSIKPMLVLASGDNQGIPLMSSIKLREEQRITTTSPWMFPSQGVWPEDHVFISTPSFNYTGRDFKRFFEDLHFEEGWYMWLQSRDLLAGLPAPGVEVYCLYGIGLPTPHTYIYDHGFPYTDPVGVLYEDGDDTVATSSTDLCGLWRGRQPQPVHLLPLHETEHLNMVFSNQTLEHINAILLGAYRSGTPASPTASPGSPPPE.

Residues 1–24 form the signal peptide; the sequence is MGPPGSPWQWVLLLLGLLLPPAAP. Asn44 carries N-linked (GlcNAc...) asparagine glycosylation. A disulfide bridge connects residues Cys74 and Cys98. N-linked (GlcNAc...) asparagine glycosylation occurs at Asn108. Ser205 (nucleophile) is an active-site residue. N-linked (GlcNAc...) asparagine glycosylation occurs at Asn296. A disulfide bridge links Cys337 with Cys380. Active-site charge relay system residues include Asp369 and His401. An N-linked (GlcNAc...) asparagine glycan is attached at Asn408.

Belongs to the AB hydrolase superfamily. Lipase family. Detected in blood plasma (at protein level). Highly expressed in liver.

The protein localises to the secreted. The catalysed reaction is a sterol + a 1,2-diacyl-sn-glycero-3-phosphocholine = a sterol ester + a 1-acyl-sn-glycero-3-phosphocholine. It carries out the reaction a 1-O-alkyl-2-acetyl-sn-glycero-3-phosphocholine + H2O = a 1-O-alkyl-sn-glycero-3-phosphocholine + acetate + H(+). The enzyme catalyses a 1-hexadecanoyl-2-acyl-sn-glycero-3-phosphocholine + (24S)-hydroxycholesterol = (24S)-24-hydroxycholesterol ester + 1-hexadecanoyl-sn-glycero-3-phosphocholine. It catalyses the reaction (24S)-hydroxycholesterol + 1-hexadecanoyl-2-(9Z,12Z-octadecadienoyl)-sn-glycero-3-phosphocholine = (24S)-hydroxycholesterol 3-linoleoate + 1-hexadecanoyl-sn-glycero-3-phosphocholine. The catalysed reaction is 1-hexadecanoyl-2-(5Z,8Z,11Z,14Z-eicosatetraenoyl)-sn-glycero-3-phosphocholine + cholesterol = cholesteryl (5Z,8Z,11Z,14Z)-eicosatetraenoate + 1-hexadecanoyl-sn-glycero-3-phosphocholine. It carries out the reaction 1-hexadecanoyl-2-(9Z-octadecenoyl)-sn-glycero-3-phosphocholine + cholesterol = cholesteryl (9Z-octadecenoate) + 1-hexadecanoyl-sn-glycero-3-phosphocholine. The enzyme catalyses 1-hexadecanoyl-2-(8Z,11Z,14Z-eicosatrienoyl)-sn-glycero-3-phosphocholine + cholesterol = cholesteryl (8Z,11Z,14Z)-eicosatrienoate + 1-hexadecanoyl-sn-glycero-3-phosphocholine. It catalyses the reaction 1-hexadecanoyl-2-(5Z,8Z,11Z-eicosatrienoyl)-sn-glycero-3-phosphocholine + cholesterol = cholesteryl (5Z,8Z,11Z)-eicosatrienoate + 1-hexadecanoyl-sn-glycero-3-phosphocholine. The catalysed reaction is 1-hexadecanoyl-2-(5Z,8Z,11Z,14Z,17Z-eicosapentaenoyl)-sn-glycero-3-phosphocholine + cholesterol = (5Z,8Z,11Z,14Z,17Z-eicosapentaenoyl)-cholesterol + 1-hexadecanoyl-sn-glycero-3-phosphocholine. It carries out the reaction 1-hexadecanoyl-2-(9Z,12Z-octadecadienoyl)-sn-glycero-3-phosphocholine + cholesterol = cholesteryl (9Z,12Z)-octadecadienoate + 1-hexadecanoyl-sn-glycero-3-phosphocholine. The enzyme catalyses 1-hexadecanoyl-2-(6Z,9Z,12Z-octadecatrienoyl)-sn-glycero-3-phosphocholine + cholesterol = (6Z,9Z,12Z-octadecatrienoyl)-cholesterol + 1-hexadecanoyl-sn-glycero-3-phosphocholine. It catalyses the reaction 1-hexadecanoyl-2-(11Z,14Z,17Z-eicosatrienoyl)-sn-glycero-3-phosphocholine + cholesterol = (11Z,14Z,17Z-eicosatrienoyl)-cholesterol + 1-hexadecanoyl-sn-glycero-3-phosphocholine. The catalysed reaction is 1-hexadecanoyl-2-(9Z,12Z,15Z-octadecatrienoyl)-sn-glycero-3-phosphocholine + cholesterol = (9Z,12Z,15Z-octadecatrienoyl)-cholesterol + 1-hexadecanoyl-sn-glycero-3-phosphocholine. It carries out the reaction 1-hexadecanoyl-2-(9Z,12Z-octadecadienoyl)-sn-glycero-3-phosphocholine + H2O = (9Z,12Z)-octadecadienoate + 1-hexadecanoyl-sn-glycero-3-phosphocholine + H(+). The enzyme catalyses 1-hexadecanoyl-2-(5Z,8Z,11Z,14Z-eicosatetraenoyl)-sn-glycero-3-phosphocholine + H2O = 1-hexadecanoyl-sn-glycero-3-phosphocholine + (5Z,8Z,11Z,14Z)-eicosatetraenoate + H(+). It catalyses the reaction a 1-O-alkyl-2-acetyl-sn-glycero-3-phosphocholine + 1-hexadecanoyl-sn-glycero-3-phosphocholine = 1-hexadecanoyl-2-acetyl-sn-glycero-3-phosphocholine + a 1-O-alkyl-sn-glycero-3-phosphocholine. Central enzyme in the extracellular metabolism of plasma lipoproteins. Synthesized mainly in the liver and secreted into plasma where it converts cholesterol and phosphatidylcholines (lecithins) to cholesteryl esters and lysophosphatidylcholines on the surface of high and low density lipoproteins (HDLs and LDLs). The cholesterol ester is then transported back to the liver. Also produced in the brain by primary astrocytes, and esterifies free cholesterol on nascent APOE-containing lipoproteins secreted from glia and influences cerebral spinal fluid (CSF) APOE- and APOA1 levels. Together with APOE and the cholesterol transporter ABCA1, plays a key role in the maturation of glial-derived, nascent lipoproteins. Required for remodeling high-density lipoprotein particles into their spherical forms. Has a preference for plasma 16:0-18:2 or 18:O-18:2 phosphatidylcholines. Catalyzes the hydrolysis of 1-O-alkyl-2-acetyl-sn-glycero-3-phosphocholine (platelet-activating factor or PAF) to 1-O-alkyl-sn-glycero-3-phosphocholine (lyso-PAF). Also catalyzes the transfer of the acetate group from PAF to 1-hexadecanoyl-sn-glycero-3-phosphocholine forming lyso-PAF. Catalyzes the esterification of (24S)-hydroxycholesterol (24(S)OH-C), also known as cerebrosterol to produce 24(S)OH-C monoesters. In Oryctolagus cuniculus (Rabbit), this protein is Phosphatidylcholine-sterol acyltransferase (LCAT).